A 158-amino-acid chain; its full sequence is NAD(P)H-quinone oxidoreductase subunit J, chloroplastic (158 aa).

It belongs to the complex I 30 kDa subunit family. As to quaternary structure, NDH is composed of at least 16 different subunits, 5 of which are encoded in the nucleus.

The protein localises to the plastid. Its subcellular location is the chloroplast thylakoid membrane. It catalyses the reaction a plastoquinone + NADH + (n+1) H(+)(in) = a plastoquinol + NAD(+) + n H(+)(out). The catalysed reaction is a plastoquinone + NADPH + (n+1) H(+)(in) = a plastoquinol + NADP(+) + n H(+)(out). Functionally, NDH shuttles electrons from NAD(P)H:plastoquinone, via FMN and iron-sulfur (Fe-S) centers, to quinones in the photosynthetic chain and possibly in a chloroplast respiratory chain. The immediate electron acceptor for the enzyme in this species is believed to be plastoquinone. Couples the redox reaction to proton translocation, and thus conserves the redox energy in a proton gradient. This Jasminum nudiflorum (Winter jasmine) protein is NAD(P)H-quinone oxidoreductase subunit J, chloroplastic.